A 419-amino-acid chain; its full sequence is Voltage-gated potassium channel subunit beta-1 (419 aa).

Residues Met1–Gly51 are disordered. Basic and acidic residues predominate over residues Ser30–Lys43. NADP(+)-binding residues include Thr108, Trp109, Gln115, and Asp137. Catalysis depends on Tyr142, which acts as the Proton donor/acceptor. NADP(+) contacts are provided by Asn210, Ser240, Arg241, Gln266, Trp295, Ser296, Pro297, Leu298, Ala299, Cys300, Lys306, Arg316, Gly375, Ser377, Gln381, Glu384, and Asn385.

This sequence belongs to the shaker potassium channel beta subunit family. Homotetramer. Interaction with tetrameric potassium channel alpha subunits gives rise to a heterooctamer. Identified in potassium channel complexes containing KCNA1, KCNA2, KCNA4, KCNA5, KCNA6, KCNAB1 and KCNAB2. Part of a complex containing KCNA1, KCNA4 and LGI1; interaction with LGI1 inhibits down-regulation of KCNA1 channel activity. Interacts with the dimer formed by GNB1 and GNG2; this enhances KCNA1 binding. Interacts with SQSTM1. In terms of tissue distribution, detected in portal vein myocytes (at protein level).

The protein resides in the cytoplasm. It is found in the membrane. The protein localises to the cell membrane. The enzyme catalyses a primary alcohol + NADP(+) = an aldehyde + NADPH + H(+). The catalysed reaction is a secondary alcohol + NADP(+) = a ketone + NADPH + H(+). In terms of biological role, regulatory subunit of the voltage-gated potassium (Kv) channels composed of pore-forming and potassium-conducting alpha subunits and of regulatory beta subunits. The beta-1/KCNAB1 cytoplasmic subunit mediates closure of delayed rectifier potassium channels by physically obstructing the pore via its N-terminal domain and increases the speed of channel closure for other family members. Promotes the inactivation of KCNA1, KCNA2, KCNA4, KCNA5 and KCNA6 alpha subunit-containing channels. Displays nicotinamide adenine dinucleotide phosphate (NADPH)-dependent aldoketoreductase activity by catalyzing the NADPH-dependent reduction of a variety of endogenous aldehydes and ketones. The binding of NADPH is required for efficient down-regulation of potassium channel activity. Oxidation of the bound NADPH restrains N-terminal domain from blocking the channel, thereby decreasing N-type inactivation of potassium channel activity. The sequence is that of Voltage-gated potassium channel subunit beta-1 (KCNAB1) from Oryctolagus cuniculus (Rabbit).